The following is a 154-amino-acid chain: S-protein homolog 12 (154 aa).

An N-terminal signal peptide occupies residues 1–30 (MGTNKIPKTLNGNLVLILIITIMMVTHSHG).

Belongs to the plant self-incompatibility (S1) protein family.

Its subcellular location is the secreted. In Arabidopsis thaliana (Mouse-ear cress), this protein is S-protein homolog 12.